A 283-amino-acid polypeptide reads, in one-letter code: Gap junction alpha-6 protein (283 aa).

The Cytoplasmic portion of the chain corresponds to 1-23 (MSDWSALHQLLEKVQPYSTAGGK). A helical transmembrane segment spans residues 24–41 (VWIKVLFIFRILLLGTAI). Residues 42–76 (ESAWSDEQFEFHCNTQQPGCENVCYDHAFPISHVR) lie on the Extracellular side of the membrane. Residues 77-99 (LWVLQVIFVSVPILLYLAHVYYV) form a helical membrane-spanning segment. At 100–150 (VRQNKKLNKQEEELEAAHFNEASVERHLETIAGEQFKCGSEEQSKVKMRGR) the chain is on the cytoplasmic side. The chain crosses the membrane as a helical span at residues 151–173 (LLLTYMASIFFKSVFEMAFLLIQ). Over 174 to 208 (WYIYGFTLSALYICEQSPCPRRVDCFLSRPTEKTI) the chain is Extracellular. The chain crosses the membrane as a helical span at residues 209 to 231 (FILFMFVVSVVSFVLDIIELFYV). The Cytoplasmic portion of the chain corresponds to 232 to 283 (LFKAIKNRMRKAEDEVYCDELPCPSHVSSSTVLTTIDSSEQAVPVELSSVCI).

This sequence belongs to the connexin family. Alpha-type (group II) subfamily. In terms of assembly, a connexon is composed of a hexamer of connexins.

Its subcellular location is the cell membrane. It localises to the cell junction. It is found in the gap junction. In terms of biological role, one gap junction consists of a cluster of closely packed pairs of transmembrane channels, the connexons, through which materials of low MW diffuse from one cell to a neighboring cell. The chain is Gap junction alpha-6 protein (Gja6) from Mus musculus (Mouse).